Consider the following 383-residue polypeptide: 2-methylcitrate synthase 2 (383 aa).

Positions 73 and 195 each coordinate substrate. His230 is a catalytic residue. Position 263–267 (263–267 (VVMGF)) interacts with CoA. The active site involves His269. A substrate-binding site is contributed by Arg278. Asp320 is an active-site residue. Substrate-binding residues include Arg345 and Arg364.

The protein belongs to the citrate synthase family. As to quaternary structure, homodimer.

The enzyme catalyses propanoyl-CoA + oxaloacetate + H2O = (2S,3S)-2-methylcitrate + CoA + H(+). It catalyses the reaction oxaloacetate + acetyl-CoA + H2O = citrate + CoA + H(+). Its pathway is organic acid metabolism; propanoate degradation. The protein operates within carbohydrate metabolism; tricarboxylic acid cycle; isocitrate from oxaloacetate: step 1/2. Its function is as follows. Involved in the catabolism of short chain fatty acids (SCFA) via the tricarboxylic acid (TCA)(acetyl degradation route) and via the 2-methylcitrate cycle I (propionate degradation route). Catalyzes the Claisen condensation of propionyl-CoA and oxaloacetate (OAA) to yield 2-methylcitrate (2-MC) and CoA. Also catalyzes the condensation of oxaloacetate with acetyl-CoA but with a lower specificity. The polypeptide is 2-methylcitrate synthase 2 (prpC2) (Corynebacterium glutamicum (strain ATCC 13032 / DSM 20300 / JCM 1318 / BCRC 11384 / CCUG 27702 / LMG 3730 / NBRC 12168 / NCIMB 10025 / NRRL B-2784 / 534)).